A 340-amino-acid chain; its full sequence is NADH-quinone oxidoreductase subunit H (340 aa).

Transmembrane regions (helical) follow at residues 9-29 (IWII…VAFI), 81-101 (LIAP…IPFA), 113-133 (LLFL…AGWA), 158-178 (GFAL…GIVL), 184-204 (LWHW…ITAV), 221-240 (IVAG…FFLA), 245-264 (MVLV…LSPF), 273-293 (LFAW…FIFT), and 316-336 (VLIP…EFHW).

The protein belongs to the complex I subunit 1 family. As to quaternary structure, NDH-1 is composed of 14 different subunits. Subunits NuoA, H, J, K, L, M, N constitute the membrane sector of the complex.

It is found in the cell inner membrane. The enzyme catalyses a quinone + NADH + 5 H(+)(in) = a quinol + NAD(+) + 4 H(+)(out). NDH-1 shuttles electrons from NADH, via FMN and iron-sulfur (Fe-S) centers, to quinones in the respiratory chain. The immediate electron acceptor for the enzyme in this species is believed to be ubiquinone. Couples the redox reaction to proton translocation (for every two electrons transferred, four hydrogen ions are translocated across the cytoplasmic membrane), and thus conserves the redox energy in a proton gradient. This subunit may bind ubiquinone. This Coxiella burnetii (strain CbuK_Q154) (Coxiella burnetii (strain Q154)) protein is NADH-quinone oxidoreductase subunit H.